Consider the following 376-residue polypeptide: Succinyl-diaminopimelate desuccinylase (376 aa).

His66 is a binding site for Zn(2+). The active site involves Asp68. Asp99 is a Zn(2+) binding site. Catalysis depends on Glu133, which acts as the Proton acceptor. 3 residues coordinate Zn(2+): Glu134, Glu162, and His349.

The protein belongs to the peptidase M20A family. DapE subfamily. As to quaternary structure, homodimer. Zn(2+) serves as cofactor. The cofactor is Co(2+).

The catalysed reaction is N-succinyl-(2S,6S)-2,6-diaminopimelate + H2O = (2S,6S)-2,6-diaminopimelate + succinate. It functions in the pathway amino-acid biosynthesis; L-lysine biosynthesis via DAP pathway; LL-2,6-diaminopimelate from (S)-tetrahydrodipicolinate (succinylase route): step 3/3. Its function is as follows. Catalyzes the hydrolysis of N-succinyl-L,L-diaminopimelic acid (SDAP), forming succinate and LL-2,6-diaminopimelate (DAP), an intermediate involved in the bacterial biosynthesis of lysine and meso-diaminopimelic acid, an essential component of bacterial cell walls. This Ruthia magnifica subsp. Calyptogena magnifica protein is Succinyl-diaminopimelate desuccinylase.